The chain runs to 204 residues: N-(5'-phosphoribosyl)anthranilate isomerase (204 aa).

The protein belongs to the TrpF family.

It carries out the reaction N-(5-phospho-beta-D-ribosyl)anthranilate = 1-(2-carboxyphenylamino)-1-deoxy-D-ribulose 5-phosphate. It participates in amino-acid biosynthesis; L-tryptophan biosynthesis; L-tryptophan from chorismate: step 3/5. The chain is N-(5'-phosphoribosyl)anthranilate isomerase from Bacillus cereus (strain ZK / E33L).